A 78-amino-acid chain; its full sequence is Small integral membrane protein 5 (78 aa).

A helical membrane pass occupies residues 32-52 (ILAFSVLVVFTATVVLLLLIA).

It is found in the membrane. The chain is Small integral membrane protein 5 (SMIM5) from Bos taurus (Bovine).